The primary structure comprises 430 residues: Asparagine--tRNA ligase (430 aa).

It belongs to the class-II aminoacyl-tRNA synthetase family. In terms of assembly, homodimer.

Its subcellular location is the cytoplasm. The catalysed reaction is tRNA(Asn) + L-asparagine + ATP = L-asparaginyl-tRNA(Asn) + AMP + diphosphate + H(+). The polypeptide is Asparagine--tRNA ligase (Staphylococcus saprophyticus subsp. saprophyticus (strain ATCC 15305 / DSM 20229 / NCIMB 8711 / NCTC 7292 / S-41)).